A 622-amino-acid chain; its full sequence is Type 2 DNA topoisomerase 6 subunit B (622 aa).

ATP-binding positions include N48, D80, 101-102 (SR), 111-118 (GQQGIGIS), and K435.

Belongs to the TOP6B family. Homodimer. Heterotetramer of two Top6A and two Top6B chains.

The catalysed reaction is ATP-dependent breakage, passage and rejoining of double-stranded DNA.. Functionally, relaxes both positive and negative superturns and exhibits a strong decatenase activity. The chain is Type 2 DNA topoisomerase 6 subunit B from Methanococcoides burtonii (strain DSM 6242 / NBRC 107633 / OCM 468 / ACE-M).